The sequence spans 169 residues: Ribosome maturation factor RimM (169 aa).

A PRC barrel domain is found at 93 to 166; sequence GEHEFYYHEI…RIQITPLPGL (74 aa).

The protein belongs to the RimM family. Binds ribosomal protein uS19.

The protein localises to the cytoplasm. An accessory protein needed during the final step in the assembly of 30S ribosomal subunit, possibly for assembly of the head region. Essential for efficient processing of 16S rRNA. May be needed both before and after RbfA during the maturation of 16S rRNA. It has affinity for free ribosomal 30S subunits but not for 70S ribosomes. The protein is Ribosome maturation factor RimM of Exiguobacterium sibiricum (strain DSM 17290 / CCUG 55495 / CIP 109462 / JCM 13490 / 255-15).